We begin with the raw amino-acid sequence, 261 residues long: tRNA U34 carboxymethyltransferase (261 aa).

Carboxy-S-adenosyl-L-methionine contacts are provided by residues Lys25, Trp39, Lys44, Gly63, 114 to 115 (VE), Tyr135, and Arg250.

Belongs to the class I-like SAM-binding methyltransferase superfamily. CmoB family. As to quaternary structure, homotetramer.

It catalyses the reaction carboxy-S-adenosyl-L-methionine + 5-hydroxyuridine(34) in tRNA = 5-carboxymethoxyuridine(34) in tRNA + S-adenosyl-L-homocysteine + H(+). Its function is as follows. Catalyzes carboxymethyl transfer from carboxy-S-adenosyl-L-methionine (Cx-SAM) to 5-hydroxyuridine (ho5U) to form 5-carboxymethoxyuridine (cmo5U) at position 34 in tRNAs. This Helicobacter pylori (strain ATCC 700392 / 26695) (Campylobacter pylori) protein is tRNA U34 carboxymethyltransferase.